The chain runs to 177 residues: Large ribosomal subunit protein uL10 (177 aa).

It belongs to the universal ribosomal protein uL10 family. Part of the ribosomal stalk of the 50S ribosomal subunit. The N-terminus interacts with L11 and the large rRNA to form the base of the stalk. The C-terminus forms an elongated spine to which L12 dimers bind in a sequential fashion forming a multimeric L10(L12)X complex.

Forms part of the ribosomal stalk, playing a central role in the interaction of the ribosome with GTP-bound translation factors. This chain is Large ribosomal subunit protein uL10, found in Thermoanaerobacter sp. (strain X514).